A 402-amino-acid chain; its full sequence is Imidazolonepropionase (402 aa).

Histidine 66 and histidine 68 together coordinate Fe(3+). Histidine 66 and histidine 68 together coordinate Zn(2+). 4-imidazolone-5-propanoate-binding residues include arginine 75, tyrosine 138, and histidine 171. Tyrosine 138 contributes to the N-formimidoyl-L-glutamate binding site. Position 236 (histidine 236) interacts with Fe(3+). Histidine 236 is a binding site for Zn(2+). Glutamine 239 contributes to the 4-imidazolone-5-propanoate binding site. Aspartate 311 is a Fe(3+) binding site. Aspartate 311 provides a ligand contact to Zn(2+). The N-formimidoyl-L-glutamate site is built by asparagine 313 and glycine 315. Threonine 316 contributes to the 4-imidazolone-5-propanoate binding site.

Belongs to the metallo-dependent hydrolases superfamily. HutI family. Zn(2+) serves as cofactor. It depends on Fe(3+) as a cofactor.

It localises to the cytoplasm. The enzyme catalyses 4-imidazolone-5-propanoate + H2O = N-formimidoyl-L-glutamate. The protein operates within amino-acid degradation; L-histidine degradation into L-glutamate; N-formimidoyl-L-glutamate from L-histidine: step 3/3. Catalyzes the hydrolytic cleavage of the carbon-nitrogen bond in imidazolone-5-propanoate to yield N-formimidoyl-L-glutamate. It is the third step in the universal histidine degradation pathway. The sequence is that of Imidazolonepropionase from Pseudomonas aeruginosa (strain ATCC 15692 / DSM 22644 / CIP 104116 / JCM 14847 / LMG 12228 / 1C / PRS 101 / PAO1).